Consider the following 611-residue polypeptide: Dihydroxy-acid dehydratase (611 aa).

Position 81 (D81) interacts with Mg(2+). C122 is a binding site for [2Fe-2S] cluster. Mg(2+) contacts are provided by D123 and K124. K124 carries the post-translational modification N6-carboxylysine. Residue C195 participates in [2Fe-2S] cluster binding. E491 provides a ligand contact to Mg(2+). The active-site Proton acceptor is S517.

This sequence belongs to the IlvD/Edd family. In terms of assembly, homodimer. [2Fe-2S] cluster serves as cofactor. Mg(2+) is required as a cofactor.

It catalyses the reaction (2R)-2,3-dihydroxy-3-methylbutanoate = 3-methyl-2-oxobutanoate + H2O. The enzyme catalyses (2R,3R)-2,3-dihydroxy-3-methylpentanoate = (S)-3-methyl-2-oxopentanoate + H2O. The protein operates within amino-acid biosynthesis; L-isoleucine biosynthesis; L-isoleucine from 2-oxobutanoate: step 3/4. It participates in amino-acid biosynthesis; L-valine biosynthesis; L-valine from pyruvate: step 3/4. Its function is as follows. Functions in the biosynthesis of branched-chain amino acids. Catalyzes the dehydration of (2R,3R)-2,3-dihydroxy-3-methylpentanoate (2,3-dihydroxy-3-methylvalerate) into 2-oxo-3-methylpentanoate (2-oxo-3-methylvalerate) and of (2R)-2,3-dihydroxy-3-methylbutanoate (2,3-dihydroxyisovalerate) into 2-oxo-3-methylbutanoate (2-oxoisovalerate), the penultimate precursor to L-isoleucine and L-valine, respectively. In Actinobacillus pleuropneumoniae serotype 3 (strain JL03), this protein is Dihydroxy-acid dehydratase.